Consider the following 816-residue polypeptide: Neuroligin-4, Y-linked (816 aa).

A signal peptide spans 1–43 (MLRPQGLLWLPLLFTSVCVMLNSNVLLWITALAIKFTLIDSQA). The Extracellular segment spans residues 44–676 (QYPVVNTNYG…TKRDYSTELS (633 aa)). Asparagine 102 carries N-linked (GlcNAc...) asparagine glycosylation. Cystine bridges form between cysteine 110-cysteine 146 and cysteine 306-cysteine 317. The tract at residues 359–364 (QGEFLN) is interaction with NRXN1. Cysteines 476 and 510 form a disulfide. A glycan (N-linked (GlcNAc...) asparagine) is linked at asparagine 511. The disordered stretch occupies residues 636–659 (TKRPAITPANNPKHSKDPHKTGPE). Basic and acidic residues predominate over residues 649 to 658 (HSKDPHKTGP). A helical transmembrane segment spans residues 677–697 (VTIAVGASLLFLNILAFAALY). The Cytoplasmic portion of the chain corresponds to 698 to 816 (YKKDKRRHET…LPHGHSTTRV (119 aa)). Residue serine 712 is modified to Phosphoserine.

It belongs to the type-B carboxylesterase/lipase family. In terms of assembly, homodimer. Interacts with NRXN1 in a calcium-dependent manner. Interaction with neurexins is mediated by heparan sulfate glycan modification on neurexin. Interacts through its C-terminus with DLG4/PSD-95 third PDZ domain. In terms of tissue distribution, expressed in fetal and adult brain, prostate and testis.

The protein resides in the cell membrane. It localises to the postsynaptic density membrane. In terms of biological role, cell surface protein involved in cell-cell-interactions via its interactions with neurexin family members. The polypeptide is Neuroligin-4, Y-linked (NLGN4Y) (Homo sapiens (Human)).